A 334-amino-acid chain; its full sequence is UDP-N-acetylglucosamine 4,6-dehydratase (inverting) (334 aa).

Residues 13-16, 37-42, 61-62, A81, K85, and 123-124 each bind NADP(+); these read TGSF, SRDELK, DV, and LS. K85 contacts substrate. Residue K127 is part of the active site. Positions 135 and 139 each coordinate NADP(+). N167 contributes to the substrate binding site. 168–172 is a binding site for NADP(+); the sequence is VVGSR. Substrate is bound by residues V175, T193, R252, and E255.

Belongs to the polysaccharide synthase family. In terms of assembly, homohexamer. NADP(+) serves as cofactor.

It catalyses the reaction UDP-N-acetyl-alpha-D-glucosamine = UDP-2-acetamido-2,6-dideoxy-beta-L-arabino-hex-4-ulose + H2O. Functionally, catalyzes the first step in the biosynthesis of pseudaminic acid, a sialic-acid-like sugar that is used to modify flagellin. Has both C6 dehydratase and C5 epimerase activities that result in the production of both UDP-2-acetamido-2,6-dideoxy-beta-L-arabino-4-hexulose and UDP-2-acetamido-2,6-dideoxy-alpha-D-xylo-4-hexulose. The polypeptide is UDP-N-acetylglucosamine 4,6-dehydratase (inverting) (pseB) (Campylobacter jejuni subsp. jejuni serotype O:2 (strain ATCC 700819 / NCTC 11168)).